The following is a 601-amino-acid chain: METISNIFHNDPLPPLGARANQSIKLRKFIISPYDSRYRTWETFLLVLVVYSAWICPFELAYLRNLSWKVSLVDNIIDSFFAIDIILTFFLAYLDQKSYLLVDDPKRIVARYFSSWFLFDVCSTIPYQLLGQIFKKHENGLAYRLLSMLRLWRLRRLSELFARLEKDIRLNYYWIRCTKLISVTLFAVHCSGCFNYLIADRYPNPARTWIGAAIPNYRSQNLWVRYVTAIYWSITTLTTTGYGDLHAENQREMLFSICYMLFNLGLTAYLIGNMTNLVVQGSCRTRNFRDTIHAASQFAARNQLPGHIKDEMLSHICLRYKTEGLKQKETLDSLPKGIRSSIACNLFLPVIEKVYLFHGVSFTCMIQLVTEMEAEYYPPREVVILQNEAPRDVYILVSGAVEERVEIDGTEKVQEVLCNGEIFGEIGVICSIPQPCAFHTIKVSQLLRLNTAVLKNIIKENSDDRRVILNNLSQKMNQDHRFSTEVMEKSLQMMHQHFGEYNRCSALNQDNEKNELKANNGHSMALEWKRVTIHMYSQRNKRPEAPLAKVINLPGSLDKLFAIACQKFNNYRLTKLVNPEFAEIDDITVIRDGDHLFFMEI.

Over M1–E42 the chain is Cytoplasmic. A helical membrane pass occupies residues T43–L63. Residues R64 to S71 are Extracellular-facing. The chain crosses the membrane as a helical span at residues L72–A92. The Cytoplasmic portion of the chain corresponds to Y93–Y112. The helical transmembrane segment at F113–I133 threads the bilayer. Residues F134 to R144 are Extracellular-facing. Residues L145–E165 traverse the membrane as a helical; Voltage-sensor segment. The Cytoplasmic portion of the chain corresponds to K166–K179. Residues L180–D200 form a helical membrane-spanning segment. The Extracellular portion of the chain corresponds to R201–V227. Residues T228–A247 constitute an intramembrane region (pore-forming). Topologically, residues E248–R251 are extracellular. Residues E252–G272 traverse the membrane as a helical segment. Residues N273–I601 are Cytoplasmic-facing. Residue L356–K475 participates in a nucleoside 3',5'-cyclic phosphate binding. Residues R530–I601 form the KHA domain.

This sequence belongs to the potassium channel family. Plant (TC 1.A.1.4) subfamily.

The protein localises to the membrane. In terms of biological role, probable inward-rectifying potassium channel. Assuming opened or closed conformations in response to the voltage difference across the membrane, the channel is activated by hyperpolarization. The sequence is that of Potassium channel KAT2 from Oryza sativa subsp. japonica (Rice).